The primary structure comprises 75 residues: Small ribosomal subunit protein bS18 (75 aa).

It belongs to the bacterial ribosomal protein bS18 family. As to quaternary structure, part of the 30S ribosomal subunit. Forms a tight heterodimer with protein bS6.

Its function is as follows. Binds as a heterodimer with protein bS6 to the central domain of the 16S rRNA, where it helps stabilize the platform of the 30S subunit. The sequence is that of Small ribosomal subunit protein bS18 from Anaplasma marginale (strain St. Maries).